The chain runs to 288 residues: Quinate/shikimate dehydrogenase (288 aa).

K71 and D107 together coordinate substrate. NAD(+) is bound by residues 132–135 (AGGA), 155–158 (NRRD), K205, 232–235 (CVYN), and G255.

This sequence belongs to the shikimate dehydrogenase family. Homodimer.

It carries out the reaction L-quinate + NAD(+) = 3-dehydroquinate + NADH + H(+). The enzyme catalyses L-quinate + NADP(+) = 3-dehydroquinate + NADPH + H(+). The catalysed reaction is shikimate + NADP(+) = 3-dehydroshikimate + NADPH + H(+). It catalyses the reaction shikimate + NAD(+) = 3-dehydroshikimate + NADH + H(+). It participates in metabolic intermediate biosynthesis; chorismate biosynthesis; chorismate from D-erythrose 4-phosphate and phosphoenolpyruvate: step 4/7. In terms of biological role, the actual biological function of YdiB remains unclear, nor is it known whether 3-dehydroshikimate or quinate represents the natural substrate. Catalyzes the reversible NAD-dependent reduction of both 3-dehydroshikimate (DHSA) and 3-dehydroquinate to yield shikimate (SA) and quinate, respectively. It can use both NAD or NADP for catalysis, however it has higher catalytic efficiency with NAD. The chain is Quinate/shikimate dehydrogenase from Escherichia coli O139:H28 (strain E24377A / ETEC).